A 420-amino-acid polypeptide reads, in one-letter code: D-tagatose-1,6-bisphosphate aldolase subunit GatZ (420 aa).

It belongs to the GatZ/KbaZ family. GatZ subfamily. As to quaternary structure, forms a complex with GatY.

The protein operates within carbohydrate metabolism; D-tagatose 6-phosphate degradation; D-glyceraldehyde 3-phosphate and glycerone phosphate from D-tagatose 6-phosphate: step 2/2. Functionally, component of the tagatose-1,6-bisphosphate aldolase GatYZ that is required for full activity and stability of the Y subunit. Could have a chaperone-like function for the proper and stable folding of GatY. When expressed alone, GatZ does not show any aldolase activity. Is involved in the catabolism of galactitol. This Shigella boydii serotype 18 (strain CDC 3083-94 / BS512) protein is D-tagatose-1,6-bisphosphate aldolase subunit GatZ.